The primary structure comprises 445 residues: Bifunctional protein GlmU (445 aa).

The pyrophosphorylase stretch occupies residues 1-218 (MRALVLAAGK…LLEITGVNTR (218 aa)). UDP-N-acetyl-alpha-D-glucosamine is bound by residues 6–9 (LAAG), K20, Q69, 74–75 (GT), 96–98 (YGD), G134, E147, N162, and N216. D98 is a binding site for Mg(2+). Mg(2+) is bound at residue N216. The segment at 219–239 (KTLVWLEEQLRMRKIEELLEN) is linker. The N-acetyltransferase stretch occupies residues 240-445 (GVTILDPATT…GWVLKKRKEE (206 aa)). R321 and K339 together coordinate UDP-N-acetyl-alpha-D-glucosamine. H351 functions as the Proton acceptor in the catalytic mechanism. UDP-N-acetyl-alpha-D-glucosamine-binding residues include Y354 and N365. Residues A368, 374–375 (NY), S393, A411, and R428 contribute to the acetyl-CoA site.

The protein in the N-terminal section; belongs to the N-acetylglucosamine-1-phosphate uridyltransferase family. It in the C-terminal section; belongs to the transferase hexapeptide repeat family. In terms of assembly, homotrimer. Mg(2+) is required as a cofactor.

It is found in the cytoplasm. It carries out the reaction alpha-D-glucosamine 1-phosphate + acetyl-CoA = N-acetyl-alpha-D-glucosamine 1-phosphate + CoA + H(+). The enzyme catalyses N-acetyl-alpha-D-glucosamine 1-phosphate + UTP + H(+) = UDP-N-acetyl-alpha-D-glucosamine + diphosphate. Its pathway is nucleotide-sugar biosynthesis; UDP-N-acetyl-alpha-D-glucosamine biosynthesis; N-acetyl-alpha-D-glucosamine 1-phosphate from alpha-D-glucosamine 6-phosphate (route II): step 2/2. It functions in the pathway nucleotide-sugar biosynthesis; UDP-N-acetyl-alpha-D-glucosamine biosynthesis; UDP-N-acetyl-alpha-D-glucosamine from N-acetyl-alpha-D-glucosamine 1-phosphate: step 1/1. It participates in bacterial outer membrane biogenesis; LPS lipid A biosynthesis. In terms of biological role, catalyzes the last two sequential reactions in the de novo biosynthetic pathway for UDP-N-acetylglucosamine (UDP-GlcNAc). The C-terminal domain catalyzes the transfer of acetyl group from acetyl coenzyme A to glucosamine-1-phosphate (GlcN-1-P) to produce N-acetylglucosamine-1-phosphate (GlcNAc-1-P), which is converted into UDP-GlcNAc by the transfer of uridine 5-monophosphate (from uridine 5-triphosphate), a reaction catalyzed by the N-terminal domain. This is Bifunctional protein GlmU from Thermotoga sp. (strain RQ2).